The sequence spans 90 residues: Large ribosomal subunit protein bL31 (90 aa).

Positions 71-90 are disordered; sequence KVKKFPSNADNQKEPAEEQE. Over residues 81–90 the composition is skewed to basic and acidic residues; the sequence is NQKEPAEEQE.

This sequence belongs to the bacterial ribosomal protein bL31 family. Type A subfamily. As to quaternary structure, part of the 50S ribosomal subunit.

Binds the 23S rRNA. The polypeptide is Large ribosomal subunit protein bL31 (rpmE) (Aster yellows witches'-broom phytoplasma (strain AYWB)).